The primary structure comprises 373 residues: S-adenosylmethionine:tRNA ribosyltransferase-isomerase (373 aa).

It belongs to the QueA family. In terms of assembly, monomer.

It is found in the cytoplasm. The catalysed reaction is 7-aminomethyl-7-carbaguanosine(34) in tRNA + S-adenosyl-L-methionine = epoxyqueuosine(34) in tRNA + adenine + L-methionine + 2 H(+). Its pathway is tRNA modification; tRNA-queuosine biosynthesis. Its function is as follows. Transfers and isomerizes the ribose moiety from AdoMet to the 7-aminomethyl group of 7-deazaguanine (preQ1-tRNA) to give epoxyqueuosine (oQ-tRNA). The polypeptide is S-adenosylmethionine:tRNA ribosyltransferase-isomerase (Caulobacter sp. (strain K31)).